Here is a 97-residue protein sequence, read N- to C-terminus: Coiled-coil domain-containing protein 167 (97 aa).

Residues 36–80 (LRKMELTEEGRKSLEKEKSSLSSRLSNYERELKSLRHENRKNMLL) adopt a coiled-coil conformation. The helical transmembrane segment at 78–95 (MLLSVAIFLLFAVGYYCW) threads the bilayer.

The protein localises to the membrane. This Xenopus tropicalis (Western clawed frog) protein is Coiled-coil domain-containing protein 167 (ccdc167).